Reading from the N-terminus, the 395-residue chain is MFSDLRKKFVFLTMSILIVVVLFLFAVSNRYNQYWDEYDAYRIVKLVAKNDYLGIPGDEPIALVTIDNQKMVKIQSNNTDLTNDVIEKSSLKLLEQGKKSRKWKSFIYSIKEYKDKTYTIAIMDLASYEVPYARRFLILVFTIFGFCLLAAVSLYLSRFIVGPVETEMTREKQFVSDASHELKTPIAAIRANVQVLEQQIPGNRYLDHVVSETKRMEFLIEDLLNLSRLDEKRSKVNFKKLNLSVLCQEVLLTYESLAYEEEKCLNDTIEDDVWIVGEESQIKQILIILLDNAIRHSLSKSAIQFSLKQARRKAILTISNPSAIYSKEVMDNLFERFYQAKDDHADSLSFGLGLSIAKAIVERHKGRIRAYQEKDQLRLEVQLPIDGFWTNTMIN.

2 helical membrane passes run 9-29 (FVFL…AVSN) and 136-156 (FLIL…SLYL). Positions 177–387 (DASHELKTPI…RLEVQLPIDG (211 aa)) constitute a Histidine kinase domain. His-180 bears the Phosphohistidine; by autocatalysis mark.

Its subcellular location is the cell membrane. It catalyses the reaction ATP + protein L-histidine = ADP + protein N-phospho-L-histidine.. In terms of biological role, member of the two-component regulatory system DltS/DltR. Regulates the expression of the dlt operon. Probably phosphorylates DltR. The sequence is that of Sensor protein DltS (dltS) from Streptococcus agalactiae serotype V (strain ATCC BAA-611 / 2603 V/R).